A 132-amino-acid polypeptide reads, in one-letter code: Large-conductance mechanosensitive channel (132 aa).

3 consecutive transmembrane segments (helical) span residues 14 to 34 (VLDM…VDSL), 39 to 59 (INPI…AVTI), and 68 to 88 (IGNF…VFLI).

Belongs to the MscL family. In terms of assembly, homopentamer.

The protein resides in the cell membrane. Functionally, channel that opens in response to stretch forces in the membrane lipid bilayer. May participate in the regulation of osmotic pressure changes within the cell. The chain is Large-conductance mechanosensitive channel from Latilactobacillus sakei subsp. sakei (strain 23K) (Lactobacillus sakei subsp. sakei).